Consider the following 263-residue polypeptide: Ubiquitin domain-containing protein 7SL RNA2 (263 aa).

The Ubiquitin-like 1 domain occupies 1-53 (MNVDIDTETGSSFSITIDFGETVLQIKEKIEKSQGIPVSKQILYLDGKALEDD). Residues 74 to 93 (ADPNQSNEQTEQSKQIDDKK) form a disordered region. The span at 76-86 (PNQSNEQTEQS) shows a compositional bias: polar residues. One can recognise a Ubiquitin-like 2 domain in the interval 184-263 (FTVHVKPYQE…GDTIELIREK (80 aa)).

The protein belongs to the ubiquitin family. As to expression, expressed in seedlings, roots, stems, rosettes and flowers (at protein level).

The protein localises to the nucleus. In terms of biological role, controls phase transition from the vegetative to the reproductive state. Involved in the maintenance of the shoot apical meristem (SAM) thus preventing inflorescence meristem (IM) formation and subsequent inflorescence stem development during flowering. Regulates leaf and organ morphology. In Arabidopsis thaliana (Mouse-ear cress), this protein is Ubiquitin domain-containing protein 7SL RNA2.